Here is a 403-residue protein sequence, read N- to C-terminus: Protein WVD2-like 6 (403 aa).

Disordered regions lie at residues 1 to 179 (MDSE…ALPN) and 254 to 403 (LKKI…AVEP). The segment covering 25-56 (GDSSNGNGGTSENLECCSTQHPMEASEGTQNE) has biased composition (polar residues). Residues 103 to 118 (SVAPNVKPVKSPKSKS) are compositionally biased toward low complexity. S113 carries the phosphoserine modification. Basic and acidic residues-rich tracts occupy residues 120–132 (NGRE…HGNH), 139–153 (GTRD…RKQV), and 162–171 (QYPKEDDGKP). Residues 263-273 (KSPKLGRKKTN) show a composition bias toward basic residues. Residues 336–348 (KVAPAKAVTASTK) show a composition bias toward low complexity. Basic and acidic residues predominate over residues 385-394 (VNEDRNESHM).

It belongs to the TPX2 family. As to expression, expressed in seedlings.

The protein localises to the cytoplasm. It localises to the cytoskeleton. Functionally, microtubule-associated protein (MAP) that regulates the orientation of interphase cortical microtubules. The chain is Protein WVD2-like 6 from Arabidopsis thaliana (Mouse-ear cress).